We begin with the raw amino-acid sequence, 256 residues long: Cell division protein FtsQ (256 aa).

The Cytoplasmic portion of the chain corresponds to 1-23 (MIKAVKMNTSFDKEKVRKHLPGA). Residues 24 to 44 (IFLSLVVITSLWLVISTISWM) traverse the membrane as a helical segment. The Periplasmic portion of the chain corresponds to 45-256 (TDEDRLPLSH…SDDVENKEEN (212 aa)). A POTRA domain is found at 50-120 (LPLSHMIIQG…ETIKVFVVEH (71 aa)).

It belongs to the FtsQ/DivIB family. FtsQ subfamily. In terms of assembly, part of a complex composed of FtsB, FtsL and FtsQ.

The protein resides in the cell inner membrane. Its function is as follows. Essential cell division protein. May link together the upstream cell division proteins, which are predominantly cytoplasmic, with the downstream cell division proteins, which are predominantly periplasmic. May control correct divisome assembly. This is Cell division protein FtsQ from Aliivibrio fischeri (strain ATCC 700601 / ES114) (Vibrio fischeri).